Consider the following 256-residue polypeptide: MSELLIRQFPCLSDNYGFLIHDPDSGETATIDTPDADVILNEADQAGWSITQIWNTHHHFDHAGGNETIQALTGAKVVAPRYDRHRIPGISMEVEDGDVISLGDHKAKVFYTPGHTMGHVCYHMPMDGIAFVGDTLFALGCGRLFEGTPAEMWHSLSRLAALPDETRIYCAHEYTEANARFALSIDPDNHDLQVYAAMVEGERARGEPTVPTTIAAEKAANPFLRPDDPAIRARLGMEHDDDEEVFAEIRRRKDSF.

His-57, His-59, Asp-61, His-62, His-115, Asp-134, and His-172 together coordinate Zn(2+).

Belongs to the metallo-beta-lactamase superfamily. Glyoxalase II family. As to quaternary structure, monomer. The cofactor is Zn(2+).

It carries out the reaction an S-(2-hydroxyacyl)glutathione + H2O = a 2-hydroxy carboxylate + glutathione + H(+). Its pathway is secondary metabolite metabolism; methylglyoxal degradation; (R)-lactate from methylglyoxal: step 2/2. In terms of biological role, thiolesterase that catalyzes the hydrolysis of S-D-lactoyl-glutathione to form glutathione and D-lactic acid. This chain is Hydroxyacylglutathione hydrolase, found in Maricaulis maris (strain MCS10) (Caulobacter maris).